The following is a 225-amino-acid chain: ATP-dependent Clp protease proteolytic subunit (225 aa).

The Nucleophile role is filled by S123. The active site involves H148.

The protein belongs to the peptidase S14 family. In terms of assembly, fourteen ClpP subunits assemble into 2 heptameric rings which stack back to back to give a disk-like structure with a central cavity, resembling the structure of eukaryotic proteasomes.

It localises to the cytoplasm. The catalysed reaction is Hydrolysis of proteins to small peptides in the presence of ATP and magnesium. alpha-casein is the usual test substrate. In the absence of ATP, only oligopeptides shorter than five residues are hydrolyzed (such as succinyl-Leu-Tyr-|-NHMec, and Leu-Tyr-Leu-|-Tyr-Trp, in which cleavage of the -Tyr-|-Leu- and -Tyr-|-Trp bonds also occurs).. Its function is as follows. Cleaves peptides in various proteins in a process that requires ATP hydrolysis. Has a chymotrypsin-like activity. Plays a major role in the degradation of misfolded proteins. In Chlorobium luteolum (strain DSM 273 / BCRC 81028 / 2530) (Pelodictyon luteolum), this protein is ATP-dependent Clp protease proteolytic subunit.